The primary structure comprises 380 residues: Acyl-coenzyme A diphosphatase NUDT19 (380 aa).

In terms of domain architecture, Nudix hydrolase spans 8-264; sequence WKEAATLIVA…KIWIPPPQFY (257 aa). Residues 115 to 136 carry the Nudix box motif; the sequence is SLIPGEVATRICAIRETFEESG. Residues Glu130 and Glu134 each contribute to the Mg(2+) site. The Microbody targeting signal signature appears at 378 to 380; the sequence is NKL.

This sequence belongs to the Nudix hydrolase family. Monomer. The cofactor is Mg(2+). It depends on Mn(2+) as a cofactor.

Its subcellular location is the peroxisome. It carries out the reaction an acyl-CoA + H2O = an acyl-4'-phosphopantetheine + adenosine 3',5'-bisphosphate + 2 H(+). It catalyses the reaction CoA + H2O = (R)-4'-phosphopantetheine + adenosine 3',5'-bisphosphate + 2 H(+). The enzyme catalyses hexanoyl-CoA + H2O = hexanoyl-4'-phosphopantetheine + adenosine 3',5'-bisphosphate + 2 H(+). The catalysed reaction is octanoyl-CoA + H2O = S-octanoyl-4'-phosphopantetheine + adenosine 3',5'-bisphosphate + 2 H(+). It carries out the reaction butanoyl-CoA + H2O = S-butanoyl-4'-phosphopantetheine + adenosine 3',5'-bisphosphate + 2 H(+). It catalyses the reaction propanoyl-CoA + H2O = propanoyl-4'-phosphopantetheine + adenosine 3',5'-bisphosphate + 2 H(+). The enzyme catalyses malonyl-CoA + H2O = malonyl-4'-phosphopantetheine + adenosine 3',5'-bisphosphate + 2 H(+). The catalysed reaction is succinyl-CoA + H2O = succinyl-4'-phosphopantetheine + adenosine 3',5'-bisphosphate + 2 H(+). It carries out the reaction choloyl-CoA + H2O = S-choloyl-4'-phosphopantetheine + adenosine 3',5'-bisphosphate + 2 H(+). It catalyses the reaction 4,8-dimethylnonanoyl-CoA + H2O = S-(4,8-dimethylnonanoyl)-4'-phosphopantetheine + adenosine 3',5'-bisphosphate + 2 H(+). The enzyme catalyses (9Z,12Z,15Z)-octadecatrienoyl-CoA + H2O = S-(9Z,12Z,15Z-octadecatrienoyl)-4'-phosphopantetheine + adenosine 3',5'-bisphosphate + 2 H(+). The catalysed reaction is (9Z,12Z)-octadecadienoyl-CoA + H2O = S-(9Z,12Z-octadecadienoyl)-4'-phosphopantetheine + adenosine 3',5'-bisphosphate + 2 H(+). It carries out the reaction (9Z)-hexadecenoyl-CoA + H2O = S-(9Z-hexadecenoyl)-4'-phosphopantetheine + adenosine 3',5'-bisphosphate + 2 H(+). It catalyses the reaction (9Z)-tetradecenoyl-CoA + H2O = S-(9Z-tetradecenoyl)-4'-phosphopantetheine + adenosine 3',5'-bisphosphate + 2 H(+). The enzyme catalyses (6Z)-octenoyl-CoA + H2O = S-(6Z-octenoyl)-4'-phosphopantetheine + adenosine 3',5'-bisphosphate + 2 H(+). The catalysed reaction is hexadecanoyl-CoA + H2O = S-hexadecanoyl-4'-phosphopantetheine + adenosine 3',5'-bisphosphate + 2 H(+). It carries out the reaction tetradecanoyl-CoA + H2O = tetradecanoyl-4'-phosphopantetheine + adenosine 3',5'-bisphosphate + 2 H(+). It catalyses the reaction dodecanoyl-CoA + H2O = S-dodecanoyl-4'-phosphopantetheine + adenosine 3',5'-bisphosphate + 2 H(+). The enzyme catalyses a 5'-end CoA-ribonucleoside in mRNA + H2O = a 5'-end phospho-adenosine-phospho-ribonucleoside in mRNA + (R)-4'-phosphopantetheine + 2 H(+). Functionally, fatty acyl-coenzyme A (CoA) diphosphatase that hydrolyzes fatty acyl-CoA to yield acyl-4'-phosphopantetheine and adenosine 3',5'-bisphosphate. Mediates the hydrolysis of a wide range of CoA esters, including choloyl-CoA and branched-chain fatty-acyl-CoA esters and at low substrate concentrations medium and long-chain fatty-acyl-CoA esters are the primary substrates. Highest activity seen with medium-chain acyl-CoA esters and higher rates of activity seen with the unsaturated acyl-CoA esters compared with the saturated esters. Exhibits decapping activity towards dpCoA-capped RNAs in vitro. The chain is Acyl-coenzyme A diphosphatase NUDT19 (nudt19) from Xenopus laevis (African clawed frog).